The primary structure comprises 364 residues: MPDNSSIANCCAASGLAARPSWPGSAEAEPPETPRAPWVAPMLSTVVIVTTAVDFVGNLLVILSVLRNRKLRNAGNLFVVNLALADLVVALYPYPLILVAILHDGWVLGEIHCKASAFVMGLSVIGSVFNITAIAINRYWCICHSATYHRACSQWHAPLYISLIWLLTLVALVPNFFVGSLEYDPRIYSCTFIQTASTQYTMAVVAIHFLLPIAVVSFCYLRIWILVLQARRKAKAERKLRLRPSDLRSFLTMFAVFVVFAICWAPLNCIGLAVAINPEAMALQIPEGLFVTSYFLAYFNSCLNAIVYGLLNQNFRREYKRILSALWSTGRCFHDASKCHLTEDLQGPVPPAAMATIPVQEGAL.

Residues 1 to 28 (MPDNSSIANCCAASGLAARPSWPGSAEA) form the signal peptide. Residues 29-45 (EPPETPRAPWVAPMLST) are Extracellular-facing. Residues 46–66 (VVIVTTAVDFVGNLLVILSVL) traverse the membrane as a helical segment. The Cytoplasmic portion of the chain corresponds to 67–81 (RNRKLRNAGNLFVVN). The helical transmembrane segment at 82 to 102 (LALADLVVALYPYPLILVAIL) threads the bilayer. Topologically, residues 103 to 115 (HDGWVLGEIHCKA) are extracellular. An intrachain disulfide couples Cys-113 to Cys-190. A helical transmembrane segment spans residues 116–136 (SAFVMGLSVIGSVFNITAIAI). The Cytoplasmic segment spans residues 137 to 158 (NRYWCICHSATYHRACSQWHAP). A helical membrane pass occupies residues 159-179 (LYISLIWLLTLVALVPNFFVG). Residues 180-200 (SLEYDPRIYSCTFIQTASTQY) lie on the Extracellular side of the membrane. A helical transmembrane segment spans residues 201–221 (TMAVVAIHFLLPIAVVSFCYL). The Cytoplasmic portion of the chain corresponds to 222-255 (RIWILVLQARRKAKAERKLRLRPSDLRSFLTMFA). A helical membrane pass occupies residues 256-276 (VFVVFAICWAPLNCIGLAVAI). Topologically, residues 277–287 (NPEAMALQIPE) are extracellular. Residues 288–308 (GLFVTSYFLAYFNSCLNAIVY) traverse the membrane as a helical segment. Residues 309–364 (GLLNQNFRREYKRILSALWSTGRCFHDASKCHLTEDLQGPVPPAAMATIPVQEGAL) are Cytoplasmic-facing.

This sequence belongs to the G-protein coupled receptor 1 family. In terms of tissue distribution, expressed in the hippocampus, kidney, and ovary.

It localises to the cell membrane. High affinity receptor for melatonin. The activity of this receptor is mediated by pertussis toxin sensitive G proteins that inhibits adenylate cyclase activity. This chain is Melatonin receptor type 1B, found in Rattus norvegicus (Rat).